A 213-amino-acid polypeptide reads, in one-letter code: Pyridoxine/pyridoxamine 5'-phosphate oxidase (213 aa).

Residues Arg57–Arg62, Phe77–Thr78, Arg83, Lys84, and Gln106 contribute to the FMN site. Residue Arg62 participates in substrate binding. Substrate is bound by residues Tyr124, Arg128, and Ser132. Residues Gly135–Pro163 form a disordered region. Gln141–Ser142 contacts FMN. Residues Leu145 to Pro163 are compositionally biased toward basic and acidic residues. Trp186 serves as a coordination point for FMN. Arg192–His194 serves as a coordination point for substrate. Arg196 serves as a coordination point for FMN.

The protein belongs to the pyridoxamine 5'-phosphate oxidase family. Homodimer. Requires FMN as cofactor.

The catalysed reaction is pyridoxamine 5'-phosphate + O2 + H2O = pyridoxal 5'-phosphate + H2O2 + NH4(+). The enzyme catalyses pyridoxine 5'-phosphate + O2 = pyridoxal 5'-phosphate + H2O2. It participates in cofactor metabolism; pyridoxal 5'-phosphate salvage; pyridoxal 5'-phosphate from pyridoxamine 5'-phosphate: step 1/1. Its pathway is cofactor metabolism; pyridoxal 5'-phosphate salvage; pyridoxal 5'-phosphate from pyridoxine 5'-phosphate: step 1/1. In terms of biological role, catalyzes the oxidation of either pyridoxine 5'-phosphate (PNP) or pyridoxamine 5'-phosphate (PMP) into pyridoxal 5'-phosphate (PLP). The protein is Pyridoxine/pyridoxamine 5'-phosphate oxidase of Granulibacter bethesdensis (strain ATCC BAA-1260 / CGDNIH1).